Reading from the N-terminus, the 131-residue chain is Small ribosomal subunit protein uS11 (131 aa).

The protein belongs to the universal ribosomal protein uS11 family. In terms of assembly, part of the 30S ribosomal subunit. Interacts with proteins S7 and S18. Binds to IF-3.

Located on the platform of the 30S subunit, it bridges several disparate RNA helices of the 16S rRNA. Forms part of the Shine-Dalgarno cleft in the 70S ribosome. In Granulibacter bethesdensis (strain ATCC BAA-1260 / CGDNIH1), this protein is Small ribosomal subunit protein uS11.